A 598-amino-acid polypeptide reads, in one-letter code: Ceramide transfer protein (598 aa).

Positions 1 to 11 (MSDNQSWNSSG) are enriched in polar residues. Residues 1 to 24 (MSDNQSWNSSGSEEDPETESGPPV) form a disordered region. The PH domain maps to 23-117 (PVERCGVLSK…WIDAIEQHKT (95 aa)). Ser126 bears the Phosphoserine mark. Ser132 carries the phosphoserine; by PKD modification. Phosphoserine is present on Ser135. The tract at residues 202-221 (DDEDDFPTTRSDGDFLHNTN) is disordered. Residues 268–301 (KREESWQKRHDKEMEKRRRLEEAYKNAMAELKKK) adopt a coiled-coil conformation. At Ser315 the chain carries Phosphoserine. Positions 321–327 (EFFDAVE) match the FFAT motif. Residues 363-592 (GTHRFVQKVE…FTSYVQEKTA (230 aa)) enclose the START domain. Residues Glu446, Gln467, Asn504, and Tyr553 each contribute to the an N-acylsphing-4-enine site.

In terms of assembly, interacts with VAPA and VAPB. Interaction with VAPB is less efficient than with VAPA. Interacts (via FFAT motif) with the MOSPD2 (via MSP domain). Phosphorylation on Ser-132 decreases the affinity toward phosphatidylinositol 4-phosphate at Golgi membranes and reduces ceramide transfer activity. Inactivated by hyperphosphorylation of serine residues by CSNK1G2/CK1 that triggers dissociation from the Golgi complex, thus down-regulating ER-to-Golgi transport of ceramide and sphingomyelin synthesis.

The protein resides in the cytoplasm. It is found in the golgi apparatus. The protein localises to the endoplasmic reticulum. It carries out the reaction N-hexadecanoylsphing-4-enine(in) = N-hexadecanoylsphing-4-enine(out). Functionally, shelters ceramides and diacylglycerol lipids inside its START domain and mediates the intracellular trafficking of ceramides and diacylglycerol lipids in a non-vesicular manner. The chain is Ceramide transfer protein (CERT1) from Cricetulus griseus (Chinese hamster).